We begin with the raw amino-acid sequence, 427 residues long: MSTSFENKATNRGVVTFTISQDKIKPALDQAFNKVKKDLTAPGFRKGHMPRTVFNQKFGEEALYEEALNSILPAAYEEAVAELELDVVTQPKVDVKSMEKGKDWEITAEVVTKPEVKLGDYKNLEVSVEESKEVTDAEVDEKIERERNNLAELVLKEDAAVEGDTVVIDFVGSVDGVEFDGGKGDNFSLELGSGQFIPGFEDQLVGKKAGETVKVNVTFPEDYQSADLAGKDATFVTTIHEVKAKEVPELDDELAKDIDEEVETLDELKAKYRKELEATKETAYNDAVEAAAIDLAVANAEIVELPEEMIHDEVQRAMQEFMGNMQRQGISSEMYFQLTGTTEEDLRKQYEADADKRVKTNLVIEAVAKAEGFEATDEEIEKEISDLATEYKMEAEQVRSLLSPDMLKHDIAMKKAVNVITDSAKVK.

One can recognise a PPIase FKBP-type domain in the interval 163-248; the sequence is GDTVVIDFVG…IHEVKAKEVP (86 aa).

It belongs to the FKBP-type PPIase family. Tig subfamily.

It localises to the cytoplasm. It carries out the reaction [protein]-peptidylproline (omega=180) = [protein]-peptidylproline (omega=0). Functionally, involved in protein export. Acts as a chaperone by maintaining the newly synthesized protein in an open conformation. Functions as a peptidyl-prolyl cis-trans isomerase. The sequence is that of Trigger factor from Streptococcus mutans serotype c (strain ATCC 700610 / UA159).